The sequence spans 237 residues: Ribonuclease PH (237 aa).

Phosphate-binding positions include Arg-86 and 124–126 (GTR).

It belongs to the RNase PH family. As to quaternary structure, homohexameric ring arranged as a trimer of dimers.

It catalyses the reaction tRNA(n+1) + phosphate = tRNA(n) + a ribonucleoside 5'-diphosphate. Functionally, phosphorolytic 3'-5' exoribonuclease that plays an important role in tRNA 3'-end maturation. Removes nucleotide residues following the 3'-CCA terminus of tRNAs; can also add nucleotides to the ends of RNA molecules by using nucleoside diphosphates as substrates, but this may not be physiologically important. Probably plays a role in initiation of 16S rRNA degradation (leading to ribosome degradation) during starvation. This Rhodopseudomonas palustris (strain ATCC BAA-98 / CGA009) protein is Ribonuclease PH.